Here is a 33-residue protein sequence, read N- to C-terminus: Photosystem II reaction center protein Psb30 (33 aa).

Residues 5–25 (ILAQLTALAFIVVSGPLVIAL) form a helical membrane-spanning segment.

This sequence belongs to the Psb30/Ycf12 family. As to quaternary structure, PSII is composed of 1 copy each of membrane proteins PsbA, PsbB, PsbC, PsbD, PsbE, PsbF, PsbH, PsbI, PsbJ, PsbK, PsbL, PsbM, PsbT, PsbX, PsbY, PsbZ, Psb30/Ycf12, peripheral proteins of the oxygen-evolving complex and a large number of cofactors. It forms dimeric complexes.

It is found in the plastid. The protein resides in the chloroplast thylakoid membrane. Functionally, a core subunit of photosystem II (PSII), probably helps stabilize the reaction center. This chain is Photosystem II reaction center protein Psb30, found in Chaetosphaeridium globosum (Charophycean green alga).